The chain runs to 333 residues: Putative pectinesterase 14 (333 aa).

The N-terminal stretch at 1–16 is a signal peptide; it reads MLFFILFLSIISPIES. N-linked (GlcNAc...) asparagine glycosylation is found at N108 and N114. T116 contributes to the substrate binding site. N133 carries an N-linked (GlcNAc...) asparagine glycan. Q151 is a substrate binding site. D174 (proton donor) is an active-site residue. D195 serves as the catalytic Nucleophile. R253 lines the substrate pocket. 2 N-linked (GlcNAc...) asparagine glycosylation sites follow: N302 and N323.

This sequence belongs to the pectinesterase family. Expressed in flower buds.

The protein resides in the secreted. Its subcellular location is the cell wall. It catalyses the reaction [(1-&gt;4)-alpha-D-galacturonosyl methyl ester](n) + n H2O = [(1-&gt;4)-alpha-D-galacturonosyl](n) + n methanol + n H(+). It participates in glycan metabolism; pectin degradation; 2-dehydro-3-deoxy-D-gluconate from pectin: step 1/5. Its function is as follows. Acts in the modification of cell walls via demethylesterification of cell wall pectin. In Arabidopsis thaliana (Mouse-ear cress), this protein is Putative pectinesterase 14 (PME14).